The primary structure comprises 503 residues: Cobyric acid synthase (503 aa).

The 203-residue stretch at 245 to 447 (DISIAIIRLP…LHGIFDEISL (203 aa)) folds into the GATase cobBQ-type domain. Cys-326 functions as the Nucleophile in the catalytic mechanism. The active site involves His-439.

This sequence belongs to the CobB/CobQ family. CobQ subfamily.

Its pathway is cofactor biosynthesis; adenosylcobalamin biosynthesis. Functionally, catalyzes amidations at positions B, D, E, and G on adenosylcobyrinic A,C-diamide. NH(2) groups are provided by glutamine, and one molecule of ATP is hydrogenolyzed for each amidation. The polypeptide is Cobyric acid synthase (Alkaliphilus metalliredigens (strain QYMF)).